The chain runs to 241 residues: uncharacterized protein (241 aa).

The interval 19–53 (KRIGYGMGEKSSAGSSRDQTYSVKPASDVKDKKKV) is disordered. Residues 30–39 (SAGSSRDQTY) show a composition bias toward polar residues.

This is an uncharacterized protein from Ostreid herpesvirus 1 (isolate France) (OsHV-1).